Here is a 125-residue protein sequence, read N- to C-terminus: Small ribosomal subunit protein uS17 (125 aa).

2 disordered regions span residues 1 to 21 and 101 to 125; these read MSSS…VSSR and VAAQ…APQA.

Belongs to the universal ribosomal protein uS17 family. In terms of assembly, part of the 30S ribosomal subunit.

One of the primary rRNA binding proteins, it binds specifically to the 5'-end of 16S ribosomal RNA. The chain is Small ribosomal subunit protein uS17 from Opitutus terrae (strain DSM 11246 / JCM 15787 / PB90-1).